We begin with the raw amino-acid sequence, 334 residues long: Glycerol-1-phosphate dehydrogenase [NAD(P)+] (334 aa).

NAD(+)-binding positions include 77 to 81 (GKPID) and 99 to 102 (TTAS). Asp-104 is a binding site for substrate. Ser-108 contacts NAD(+). Residue Asp-147 coordinates substrate. 2 residues coordinate Zn(2+): Asp-147 and His-225. His-229 serves as a coordination point for substrate. Position 246 (His-246) interacts with Zn(2+).

The protein belongs to the glycerol-1-phosphate dehydrogenase family. Zn(2+) serves as cofactor.

Its subcellular location is the cytoplasm. It carries out the reaction sn-glycerol 1-phosphate + NAD(+) = dihydroxyacetone phosphate + NADH + H(+). It catalyses the reaction sn-glycerol 1-phosphate + NADP(+) = dihydroxyacetone phosphate + NADPH + H(+). Its pathway is membrane lipid metabolism; glycerophospholipid metabolism. Its function is as follows. Catalyzes the NAD(P)H-dependent reduction of dihydroxyacetonephosphate (DHAP or glycerone phosphate) to glycerol 1-phosphate (G1P). The G1P thus generated is used as the glycerophosphate backbone of phospholipids in the cellular membranes of Archaea. This chain is Glycerol-1-phosphate dehydrogenase [NAD(P)+], found in Methanococcus vannielii (strain ATCC 35089 / DSM 1224 / JCM 13029 / OCM 148 / SB).